The sequence spans 136 residues: Small ribosomal subunit protein uS9 (136 aa).

Belongs to the universal ribosomal protein uS9 family.

This chain is Small ribosomal subunit protein uS9, found in Borrelia turicatae (strain 91E135).